Reading from the N-terminus, the 550-residue chain is CTP synthase (550 aa).

Residues 1 to 270 are amidoligase domain; the sequence is MTKYVFVTGG…DRIICEELKL (270 aa). S13 lines the CTP pocket. S13 contacts UTP. ATP-binding positions include 14–19 and D71; that span reads SLGKGI. 2 residues coordinate Mg(2+): D71 and E144. Residues 151 to 153, 191 to 196, and K227 contribute to the CTP site; these read DIE and KTKPTQ. UTP-binding positions include 191 to 196 and K227; that span reads KTKPTQ. A Glutamine amidotransferase type-1 domain is found at 295-547; that stretch reads TIGMVGKYVD…VEAALANKQA (253 aa). G356 is an L-glutamine binding site. The active-site Nucleophile; for glutamine hydrolysis is the C383. L-glutamine contacts are provided by residues 384 to 387, E407, and R473; that span reads LGMQ. Active-site residues include H520 and E522.

Belongs to the CTP synthase family. In terms of assembly, homotetramer.

It carries out the reaction UTP + L-glutamine + ATP + H2O = CTP + L-glutamate + ADP + phosphate + 2 H(+). The catalysed reaction is L-glutamine + H2O = L-glutamate + NH4(+). The enzyme catalyses UTP + NH4(+) + ATP = CTP + ADP + phosphate + 2 H(+). Its pathway is pyrimidine metabolism; CTP biosynthesis via de novo pathway; CTP from UDP: step 2/2. Its activity is regulated as follows. Allosterically activated by GTP, when glutamine is the substrate; GTP has no effect on the reaction when ammonia is the substrate. The allosteric effector GTP functions by stabilizing the protein conformation that binds the tetrahedral intermediate(s) formed during glutamine hydrolysis. Inhibited by the product CTP, via allosteric rather than competitive inhibition. Its function is as follows. Catalyzes the ATP-dependent amination of UTP to CTP with either L-glutamine or ammonia as the source of nitrogen. Regulates intracellular CTP levels through interactions with the four ribonucleotide triphosphates. This is CTP synthase from Burkholderia lata (strain ATCC 17760 / DSM 23089 / LMG 22485 / NCIMB 9086 / R18194 / 383).